A 120-amino-acid chain; its full sequence is Large ribosomal subunit protein uL18 (120 aa).

The protein belongs to the universal ribosomal protein uL18 family. In terms of assembly, part of the 50S ribosomal subunit; part of the 5S rRNA/L5/L18/L25 subcomplex. Contacts the 5S and 23S rRNAs.

Functionally, this is one of the proteins that bind and probably mediate the attachment of the 5S RNA into the large ribosomal subunit, where it forms part of the central protuberance. In Bordetella bronchiseptica (strain ATCC BAA-588 / NCTC 13252 / RB50) (Alcaligenes bronchisepticus), this protein is Large ribosomal subunit protein uL18.